We begin with the raw amino-acid sequence, 142 residues long: Large ribosomal subunit protein uL16 (142 aa).

Belongs to the universal ribosomal protein uL16 family. Part of the 50S ribosomal subunit.

Functionally, binds 23S rRNA and is also seen to make contacts with the A and possibly P site tRNAs. The sequence is that of Large ribosomal subunit protein uL16 from Thermotoga sp. (strain RQ2).